The primary structure comprises 334 residues: Serine/Arginine-related protein 53 (334 aa).

Basic and acidic residues predominate over residues 1 to 13 (MGRRSSDTEEESR). Disordered regions lie at residues 1–179 (MGRR…HLPP), 198–220 (DEAL…EDQA), and 246–290 (RSSK…SIPT). Positions 14 to 24 (SKRKKKHRRRS) are enriched in basic residues. A compositionally biased stretch (basic and acidic residues) spans 44-62 (PRSDSRSWSRDRQLRSHSY). Residues 78 to 118 (SRRKRSRSRSRGRGKPYRVQRSRSKSRTRRSRSRPRPRSHS) are compositionally biased toward basic residues. 3 stretches are compositionally biased toward basic and acidic residues: residues 132–166 (RSRD…KRGD), 198–218 (DEAL…KEED), and 247–256 (SSKDVKKAVE). The stretch at 180–236 (AEQAKARLQLVLEAAAKADEALKAKERSEEEAKRRKEEDQATLVEQVKRVKEIEAIE) forms a coiled coil. Residues 265–278 (AASGPASAAAEPPS) are compositionally biased toward low complexity.

As to quaternary structure, interacts (via Arg/Ser-rich domain) with LUC7L3, RBM39 and RSF1. Post-translationally, phosphorylated.

It localises to the nucleus. The protein resides in the nucleus speckle. The protein localises to the cytoplasm. In terms of biological role, plays a role in pre-mRNA splicing. Involved in both constitutive and alternative pre-mRNA splicing. May have a role in the recognition of the 3' splice site during the second step of splicing. The sequence is that of Serine/Arginine-related protein 53 (Rsrc1) from Mus musculus (Mouse).